The following is a 173-amino-acid chain: MKTWYMVVVIGFLATLVQTSLALKEEDCEVCVKTVRRFAESLDDSTKKDYKQIETAFKKFCKTQKNKEHRFCYYLGGLEESATGILNELSKPLSWSMPAEKICEKLKKKDAQICDLRYEKQIDLNSVDLKKLKVRDLKKILNDWDESCDGCLEKGDFIKRIEELKPKYSRSEL.

Residues 1–22 form the signal peptide; it reads MKTWYMVVVIGFLATLVQTSLA. 4 disulfide bridges follow: Cys28-Cys114, Cys31-Cys103, Cys61-Cys72, and Cys148-Cys151.

Belongs to the ARMET family.

It is found in the secreted. Required during the maturation of the embryonic nervous system for maintenance of neuronal and cuticular connectivity. Essential for maintenance of dopaminergic neurons and dopamine levels. In Drosophila yakuba (Fruit fly), this protein is Mesencephalic astrocyte-derived neurotrophic factor homolog.